A 227-amino-acid chain; its full sequence is Translation initiation factor 6 (227 aa).

The protein belongs to the eIF-6 family.

In terms of biological role, binds to the 50S ribosomal subunit and prevents its association with the 30S ribosomal subunit to form the 70S initiation complex. The chain is Translation initiation factor 6 from Methanococcus maripaludis (strain C6 / ATCC BAA-1332).